The following is a 299-amino-acid chain: Pseudouridine-5'-phosphate glycosidase (299 aa).

E23 (proton donor) is an active-site residue. Substrate-binding residues include K84 and V104. D136 serves as a coordination point for Mn(2+). Substrate is bound at residue 138–140; it reads SAD. K157 acts as the Nucleophile in catalysis.

Belongs to the pseudouridine-5'-phosphate glycosidase family. Homotrimer. Mn(2+) is required as a cofactor.

The enzyme catalyses D-ribose 5-phosphate + uracil = psi-UMP + H2O. In terms of biological role, catalyzes the reversible cleavage of pseudouridine 5'-phosphate (PsiMP) to ribose 5-phosphate and uracil. Functions biologically in the cleavage direction, as part of a pseudouridine degradation pathway. In Solibacter usitatus (strain Ellin6076), this protein is Pseudouridine-5'-phosphate glycosidase.